The following is a 389-amino-acid chain: Endonuclease 8-like 1 (389 aa).

Residue proline 2 is the Schiff-base intermediate with DNA of the active site. Glutamate 3 functions as the Proton donor in the catalytic mechanism. Catalysis depends on lysine 54, which acts as the Proton donor; for beta-elimination activity. Asparagine 176 lines the DNA pocket. Residues 278 to 389 (TIWFQGDPGP…PREAGESSAS (112 aa)) are disordered. Over residues 322 to 333 (SRMRRARKHPPK) the composition is skewed to basic residues. Residues 336 to 351 (AQQSEGAGLQQNQETP) show a composition bias toward polar residues. The span at 357 to 373 (GKRRGQRASTGHRRRPK) shows a compositional bias: basic residues. Over residues 374–389 (TIPDTRPREAGESSAS) the composition is skewed to basic and acidic residues.

Belongs to the FPG family. Detected in heart, spleen and lung.

It is found in the cytoplasm. The protein resides in the cytoskeleton. It localises to the microtubule organizing center. Its subcellular location is the centrosome. The protein localises to the nucleus. It is found in the chromosome. The enzyme catalyses 2'-deoxyribonucleotide-(2'-deoxyribose 5'-phosphate)-2'-deoxyribonucleotide-DNA = a 3'-end 2'-deoxyribonucleotide-(2,3-dehydro-2,3-deoxyribose 5'-phosphate)-DNA + a 5'-end 5'-phospho-2'-deoxyribonucleoside-DNA + H(+). Involved in base excision repair of DNA damaged by oxidation or by mutagenic agents. Acts as a DNA glycosylase that recognizes and removes damaged bases. Has a preference for oxidized pyrimidines, such as thymine glycol, formamidopyrimidine (Fapy) and 5-hydroxyuracil. Has marginal activity towards 8-oxoguanine. Has AP (apurinic/apyrimidinic) lyase activity and introduces nicks in the DNA strand. Cleaves the DNA backbone by beta-delta elimination to generate a single-strand break at the site of the removed base with both 3'- and 5'-phosphates. Has DNA glycosylase/lyase activity towards mismatched uracil and thymine, in particular in U:C and T:C mismatches. Specifically binds 5-hydroxymethylcytosine (5hmC), suggesting that it acts as a specific reader of 5hmC. This is Endonuclease 8-like 1 (Neil1) from Mus musculus (Mouse).